The sequence spans 354 residues: Neuronal growth regulator 1 (354 aa).

The N-terminal stretch at 1-37 (MDMMLLVQGACCSNQWLAAVLLSLCCLLPSCLPAGQS) is a signal peptide. 3 consecutive Ig-like C2-type domains span residues 38–134 (VDFP…VHLT), 139–221 (PKIY…KVVV), and 225–313 (PTIQ…LPLN). A disulfide bridge links Cys60 with Cys118. N-linked (GlcNAc...) asparagine glycosylation is found at Asn73 and Asn155. Disulfide bonds link Cys160/Cys203 and Cys245/Cys297. Position 187 is a phosphotyrosine (Tyr187). N-linked (GlcNAc...) asparagine glycosylation is found at Asn275, Asn286, Asn294, and Asn307. A lipid anchor (GPI-anchor amidated glycine) is attached at Gly324. A propeptide spans 325–354 (SADVLFSCWYLVLTLSSFTSIFYLKNAILQ) (removed in mature form).

This sequence belongs to the immunoglobulin superfamily. IgLON family.

It is found in the cell membrane. Functionally, may be involved in cell-adhesion. May function as a trans-neural growth-promoting factor in regenerative axon sprouting in the mammalian brain. The chain is Neuronal growth regulator 1 (NEGR1) from Homo sapiens (Human).